We begin with the raw amino-acid sequence, 810 residues long: Protein kinase C-binding protein NELL1 (810 aa).

A signal peptide spans 1-21 (MPMDLILVVWFCVCTARTVVG). Residues Asn40, Asn53, Asn83, Asn224, Asn294, and Asn372 are each glycosylated (N-linked (GlcNAc...) asparagine). Residues 64-227 (EREIHAAPHV…TQCPNLNHTC (164 aa)) enclose the Laminin G-like domain. Residues 271-332 (KTCQVSGLLY…IAGQCCKVCR (62 aa)) form the VWFC 1 domain. Intrachain disulfides connect Cys395–Cys407, Cys401–Cys416, and Cys418–Cys432. Asp434, Ile435, and Glu437 together coordinate Ca(2+). An EGF-like 1; calcium-binding domain is found at 434-475 (DIDECAAKMHYCHANTVCVNLPGLYRCDCVPGYIRVDDFSCT). Cystine bridges form between Cys438-Cys451, Cys445-Cys460, Cys462-Cys474, Cys480-Cys493, Cys487-Cys502, Cys504-Cys515, Cys519-Cys529, Cys523-Cys535, Cys537-Cys546, Cys553-Cys566, Cys560-Cys575, Cys577-Cys594, Cys600-Cys613, Cys607-Cys622, and Cys624-Cys630. The Ca(2+) site is built by Asn453, Leu454, and Leu457. The region spanning 476 to 516 (EHDECGSGQHNCDENAICTNTVQGHSCTCKPGYVGNGTICR) is the EGF-like 2; calcium-binding domain. An N-linked (GlcNAc...) asparagine glycan is attached at Asn511. The region spanning 517–547 (AFCEEGCRYGGTCVAPNKCVCPSGFTGSHCE) is the EGF-like 3 domain. One can recognise an EGF-like 4; calcium-binding domain in the interval 549 to 587 (DIDECSEGIIECHNHSRCVNLPGWYHCECRSGFHDDGTY). A glycan (N-linked (GlcNAc...) asparagine) is linked at Asn562. Residues 596–631 (DIDECALRTHTCWNDSACINLAGGFDCLCPSGPSCS) form the EGF-like 5; calcium-binding domain. A glycan (N-linked (GlcNAc...) asparagine) is linked at Asn609. Positions 692 to 750 (SQCLDQNGHKLYRSGDNWTHSCQQCRCLEGEVDCWPLTCPNLSCEYTAILEGECCPRCV) constitute a VWFC 2 domain. N-linked (GlcNAc...) asparagine glycosylation is found at Asn708, Asn732, and Asn758.

Homotrimer. Binds to PKC beta-1. Interacts with ATRAID; the interaction promotes osteoblast cell differentiation and mineralization. Interacts with ROBO3.

It localises to the cytoplasm. The protein resides in the nucleus envelope. The protein localises to the secreted. Its function is as follows. Plays a role in the control of cell growth and differentiation. Promotes osteoblast cell differentiation and terminal mineralization. This chain is Protein kinase C-binding protein NELL1 (NELL1), found in Homo sapiens (Human).